A 425-amino-acid polypeptide reads, in one-letter code: Formyl-CoA:oxalate CoA-transferase (425 aa).

CoA is bound by residues 17 to 18 (QS), R38, 72 to 75 (LDTK), 96 to 98 (NFG), R104, and 136 to 139 (KVYE). D168 acts as the Nucleophile in catalysis. 247-249 (GGQ) lines the substrate pocket.

Belongs to the CoA-transferase III family. Frc subfamily. Homodimer.

The catalysed reaction is formyl-CoA + oxalate = oxalyl-CoA + formate. It participates in metabolic intermediate degradation; oxalate degradation; CO(2) and formate from oxalate: step 1/2. Its function is as follows. Involved in the catabolism of oxalate and in the adapatation to low pH via the induction of the oxalate-dependent acid tolerance response (ATR). Catalyzes the transfer of the CoA moiety from formyl-CoA to oxalate. The protein is Formyl-CoA:oxalate CoA-transferase of Bradyrhizobium sp. (strain ORS 278).